A 403-amino-acid chain; its full sequence is Acetate kinase (403 aa).

Asn-7 is a binding site for Mg(2+). Residue Lys-14 coordinates ATP. Arg-95 is a substrate binding site. Residue Asp-152 is the Proton donor/acceptor of the active site. Residues 212–216 (HLGNG), 286–288 (DMR), and 335–339 (GIGEN) each bind ATP. Glu-389 contacts Mg(2+).

This sequence belongs to the acetokinase family. In terms of assembly, homodimer. Mg(2+) serves as cofactor. The cofactor is Mn(2+).

Its subcellular location is the cytoplasm. It carries out the reaction acetate + ATP = acetyl phosphate + ADP. The protein operates within metabolic intermediate biosynthesis; acetyl-CoA biosynthesis; acetyl-CoA from acetate: step 1/2. Catalyzes the formation of acetyl phosphate from acetate and ATP. Can also catalyze the reverse reaction. In Desulfovibrio desulfuricans (strain ATCC 27774 / DSM 6949 / MB), this protein is Acetate kinase.